The chain runs to 271 residues: MIRTLLLSALVAGALSCGYPTYEVEDDVSRVVGGQEATPNTWPWQVSLQVLSSGRWRHNCGGSLVANNWVLTAAHCLSNYQTYRVLLGAHSLSNPGAGSAAVQVSKLVVHQRWNSQNVGNGYDIALIKLASPVTLSKNIQTACLPPAGTILPRNYVCYVTGWGLLQTNGNSPDTLRQGRLLVVDYATCSSASWWGSSVKSSMVCAGGDGVTSSCNGDSGGPLNCRASNGQWQVHGIVSFGSSLGCNYPRKPSVFTRVSNYIDWINSVMARN.

Residues 1–16 (MIRTLLLSALVAGALS) form the signal peptide. Residues 17 to 30 (CGYPTYEVEDDVSR) constitute a propeptide, activation peptide. Residues 31–269 (VVGGQEATPN…YIDWINSVMA (239 aa)) form the Peptidase S1 domain. Residues C60 and C76 are joined by a disulfide bond. Residues H75 and D123 each act as charge relay system in the active site. 3 disulfides stabilise this stretch: C157–C224, C188–C204, and C214–C245. S218 (charge relay system) is an active-site residue.

It belongs to the peptidase S1 family. Elastase subfamily. In terms of assembly, interacts with CPA1. Interacts with SERPINA1. In terms of tissue distribution, highly expressed in pancreas (at mRNA and protein levels). Also expressed in adrenal gland and small intestine.

It is found in the secreted. The catalysed reaction is Preferential cleavage: Leu-|-Xaa, Met-|-Xaa and Phe-|-Xaa. Hydrolyzes elastin.. Elastase that enhances insulin signaling and might have a physiologic role in cellular glucose metabolism. Circulates in plasma and reduces platelet hyperactivation, triggers both insulin secretion and degradation, and increases insulin sensitivity. The chain is Chymotrypsin-like elastase family member 2A from Mus musculus (Mouse).